The chain runs to 413 residues: Coiled-coil domain-containing protein 83 (413 aa).

Coiled-coil stretches lie at residues 32–186 (HCQI…RIIR) and 215–255 (IWEN…QLFN).

The chain is Coiled-coil domain-containing protein 83 (CCDC83) from Bos taurus (Bovine).